Reading from the N-terminus, the 252-residue chain is Lipoprotein PrgK (252 aa).

The N-terminal stretch at 1–17 is a signal peptide; it reads MIRRYLYTFLLVMTLAG. Cysteine 18 is lipidated: N-palmitoyl cysteine. Cysteine 18 is lipidated: S-diacylglycerol cysteine. The chain crosses the membrane as a helical span at residues 207-227; that stretch reads FATSWIVLIILLSVMSAGFGV.

This sequence belongs to the YscJ lipoprotein family.

The protein resides in the cell outer membrane. Functionally, required for invasion of epithelial cells. Could be involved in protein secretion. The protein is Lipoprotein PrgK (prgK) of Salmonella typhimurium (strain LT2 / SGSC1412 / ATCC 700720).